The following is a 480-amino-acid chain: Coronin-2B (480 aa).

WD repeat units lie at residues 85–125 (GHQG…LKRN), 135–177 (GHSR…KMID), 179–217 (HRDV…VLQE), 220–263 (CKTH…MPVT), and 265–308 (EEID…PYLT). A coiled-coil region spans residues 436–475 (NELLRMFFRQQEEIRRLKEQLSQRDLLVRQLELELKNLRN).

Belongs to the WD repeat coronin family.

It localises to the cytoplasm. The protein localises to the cytoskeleton. Functionally, may play a role in the reorganization of neuronal actin structure. This chain is Coronin-2B (coro2b), found in Xenopus tropicalis (Western clawed frog).